Here is a 144-residue protein sequence, read N- to C-terminus: Toxin MT0934 (144 aa).

Its function is as follows. Toxic component of a type II toxin-antitoxin (TA) system. Its toxic effect is neutralized by coexpression with cognate antitoxin MT0933. In Mycobacterium tuberculosis (strain CDC 1551 / Oshkosh), this protein is Toxin MT0934.